The primary structure comprises 388 residues: Chorismate synthase (388 aa).

NADP(+)-binding residues include arginine 39 and arginine 45. The segment at 95–118 (EKNEKSRRVSRPRPGHADLVGGMK) is disordered. FMN is bound by residues 130 to 132 (RSS), 251 to 252 (NA), glycine 296, 311 to 315 (KPIPT), and arginine 337.

It belongs to the chorismate synthase family. Homotetramer. It depends on FMNH2 as a cofactor.

The catalysed reaction is 5-O-(1-carboxyvinyl)-3-phosphoshikimate = chorismate + phosphate. It functions in the pathway metabolic intermediate biosynthesis; chorismate biosynthesis; chorismate from D-erythrose 4-phosphate and phosphoenolpyruvate: step 7/7. In terms of biological role, catalyzes the anti-1,4-elimination of the C-3 phosphate and the C-6 proR hydrogen from 5-enolpyruvylshikimate-3-phosphate (EPSP) to yield chorismate, which is the branch point compound that serves as the starting substrate for the three terminal pathways of aromatic amino acid biosynthesis. This reaction introduces a second double bond into the aromatic ring system. The polypeptide is Chorismate synthase (Listeria welshimeri serovar 6b (strain ATCC 35897 / DSM 20650 / CCUG 15529 / CIP 8149 / NCTC 11857 / SLCC 5334 / V8)).